Consider the following 361-residue polypeptide: MQLAQRLCELLMCRRKAAPVADYVLLQPSEDVELRELQAFLDENFKQLEITPADLRTFSRDTDVVNHLLKLLPLYRQCQSKCAFLKGYLSEGCLPHTRPAAEVECKKSQRILEALDILILKLVVGEFAMSEADSLEMLLDKFSTDQASLVEVQRVMGLVDMDCEKSAYMLEAGAAATVAPLTPPAVVQGESGVREDGETVAAVSAFACPSVSDSLIPEETGVTRPMMSLAHINTVSCPTVMRFDQRLLEEGDEEDEVTVMSPSPEPVQQQPPVEPVQQQPQGRGSHRRRYKESAPQETLPTNHEREILDLMRHSPDVPREAVMSPTMVTIPPPQIPFVGSARELRGVKKKKPTAAALLSSA.

Residue cysteine 8 is the site of S-palmitoyl cysteine; by host attachment. Residues 251–299 (GDEEDEVTVMSPSPEPVQQQPPVEPVQQQPQGRGSHRRRYKESAPQETL) form a disordered region. The segment covering 266–281 (PVQQQPPVEPVQQQPQ) has biased composition (low complexity).

The protein belongs to the herpesviridae UL51 family. Oligomerizes. Interacts with UL103; this interaction mediates UL103 incorporation to virions. Phosphorylated. Post-translationally, palmitoylation is necessary for Golgi localization.

The protein localises to the virion tegument. The protein resides in the host cytoplasm. It localises to the host Golgi apparatus. In terms of biological role, plays several roles during the time course of infection, including egress of virus particles from the perinuclear space and secondary envelopment of cytoplasmic capsids that bud into specific trans-Golgi network (TGN)-derived membranes. The chain is Tegument protein UL51 homolog (UL71) from Homo sapiens (Human).